The sequence spans 962 residues: Leucine--tRNA ligase (962 aa).

The 'HIGH' region motif lies at 40 to 51 (PYPSGAGLHVGH). Positions 737–741 (KMSKS) match the 'KMSKS' region motif. Lys-740 is an ATP binding site.

Belongs to the class-I aminoacyl-tRNA synthetase family.

The protein resides in the cytoplasm. The catalysed reaction is tRNA(Leu) + L-leucine + ATP = L-leucyl-tRNA(Leu) + AMP + diphosphate. The protein is Leucine--tRNA ligase of Flavobacterium psychrophilum (strain ATCC 49511 / DSM 21280 / CIP 103535 / JIP02/86).